A 276-amino-acid polypeptide reads, in one-letter code: Potassium/proton antiporter CemA (276 aa).

The next 3 membrane-spanning stretches (helical) occupy residues 59 to 79, 199 to 219, and 236 to 256; these read LLLLILIPVLVNQMSKSWIFG, FFIILFTDMFIGFHSPHGWEV, and FIFLFIATFPVALDTVFKYWI.

This sequence belongs to the CemA family.

The protein resides in the plastid. Its subcellular location is the chloroplast inner membrane. The catalysed reaction is K(+)(in) + H(+)(out) = K(+)(out) + H(+)(in). Its function is as follows. Contributes to K(+)/H(+) antiport activity by supporting proton efflux to control proton extrusion and homeostasis in chloroplasts in a light-dependent manner to modulate photosynthesis. Prevents excessive induction of non-photochemical quenching (NPQ) under continuous-light conditions. Indirectly promotes efficient inorganic carbon uptake into chloroplasts. This is Potassium/proton antiporter CemA from Cyanidioschyzon merolae (strain NIES-3377 / 10D) (Unicellular red alga).